Consider the following 260-residue polypeptide: MSGEMSPIDRAKYVAAKRAVGFVEDGMRVGLGTGSTAAWMVRHLAETVDQEGMDITCVATSTRTAELARDLKLHVTTLDEVKWLDLTIDGADEFDPTLNLIKGGGGALLQEKIVATASDRMIVITDASKAVATLGAFPLPVEVIRFGWETTRTLIEETLVNVDVGGREAILRMENGMPYVTDEGNFIVDLHLERIGNPRQVSLVLNQLPGVVENGLFLDICDVVVIGKSDGSVELRDINEGSVHQEQVEVTATGNVFSDL.

Residues 33 to 36 (TGST), 89 to 92 (DGAD), and 102 to 105 (KGGG) each bind substrate. Catalysis depends on E111, which acts as the Proton acceptor. K129 contacts substrate.

This sequence belongs to the ribose 5-phosphate isomerase family. Homodimer.

The enzyme catalyses aldehydo-D-ribose 5-phosphate = D-ribulose 5-phosphate. It functions in the pathway carbohydrate degradation; pentose phosphate pathway; D-ribose 5-phosphate from D-ribulose 5-phosphate (non-oxidative stage): step 1/1. Functionally, catalyzes the reversible conversion of ribose-5-phosphate to ribulose 5-phosphate. This Dinoroseobacter shibae (strain DSM 16493 / NCIMB 14021 / DFL 12) protein is Ribose-5-phosphate isomerase A.